A 197-amino-acid chain; its full sequence is Large ribosomal subunit protein bL25 (197 aa).

Belongs to the bacterial ribosomal protein bL25 family. CTC subfamily. Part of the 50S ribosomal subunit; part of the 5S rRNA/L5/L18/L25 subcomplex. Contacts the 5S rRNA. Binds to the 5S rRNA independently of L5 and L18.

In terms of biological role, this is one of the proteins that binds to the 5S RNA in the ribosome where it forms part of the central protuberance. In Carboxydothermus hydrogenoformans (strain ATCC BAA-161 / DSM 6008 / Z-2901), this protein is Large ribosomal subunit protein bL25.